The following is a 238-amino-acid chain: tRNA (guanine-N(1)-)-methyltransferase (238 aa).

S-adenosyl-L-methionine contacts are provided by residues G108 and 127-132 (LGDFVL).

This sequence belongs to the RNA methyltransferase TrmD family. As to quaternary structure, homodimer.

It localises to the cytoplasm. The enzyme catalyses guanosine(37) in tRNA + S-adenosyl-L-methionine = N(1)-methylguanosine(37) in tRNA + S-adenosyl-L-homocysteine + H(+). Its function is as follows. Specifically methylates guanosine-37 in various tRNAs. In Streptococcus uberis (strain ATCC BAA-854 / 0140J), this protein is tRNA (guanine-N(1)-)-methyltransferase.